A 109-amino-acid polypeptide reads, in one-letter code: Putative membrane protein insertion efficiency factor (109 aa).

It belongs to the UPF0161 family.

It localises to the cell inner membrane. Functionally, could be involved in insertion of integral membrane proteins into the membrane. This is Putative membrane protein insertion efficiency factor from Rhodopseudomonas palustris (strain BisA53).